Consider the following 341-residue polypeptide: Paired box protein Pax-9 (341 aa).

The segment at residues 4 to 130 (AFGEVNQLGG…SSISRILRNK (127 aa)) is a DNA-binding region (paired). The tract at residues 7–63 (EVNQLGGVFVNGRPLPNAIRLRIVELAQLGIRPCDISRQLRVSHGCVSKILARYNET) is PAI subdomain. Residues 82–130 (TVVKHIRTYKQRDPGIFAWEIRDRLLADGVCDKYNVPSVSSISRILRNK) are RED subdomain. Positions 168-189 (AAAAKVPTPPGVPAIPGSVAMP) are interaction with KDM5B.

Interacts with KDM5B.

It localises to the nucleus. Its function is as follows. Transcription factor required for normal development of thymus, parathyroid glands, ultimobranchial bodies, teeth, skeletal elements of skull and larynx as well as distal limbs. This chain is Paired box protein Pax-9 (PAX9), found in Saimiri boliviensis boliviensis (Bolivian squirrel monkey).